Consider the following 352-residue polypeptide: S-adenosylmethionine:tRNA ribosyltransferase-isomerase (352 aa).

Belongs to the QueA family. As to quaternary structure, monomer.

It is found in the cytoplasm. It carries out the reaction 7-aminomethyl-7-carbaguanosine(34) in tRNA + S-adenosyl-L-methionine = epoxyqueuosine(34) in tRNA + adenine + L-methionine + 2 H(+). The protein operates within tRNA modification; tRNA-queuosine biosynthesis. In terms of biological role, transfers and isomerizes the ribose moiety from AdoMet to the 7-aminomethyl group of 7-deazaguanine (preQ1-tRNA) to give epoxyqueuosine (oQ-tRNA). This Allorhizobium ampelinum (strain ATCC BAA-846 / DSM 112012 / S4) (Agrobacterium vitis (strain S4)) protein is S-adenosylmethionine:tRNA ribosyltransferase-isomerase.